Reading from the N-terminus, the 575-residue chain is GBF-interacting protein 1-like (575 aa).

2 disordered regions span residues 66 to 171 (SKRE…SKSD) and 229 to 296 (SSSN…VVHS). 3 stretches are compositionally biased toward polar residues: residues 90 to 102 (FASS…SGRN), 115 to 138 (TRGS…NETK), and 161 to 171 (ISASRCSSKSD). A compositionally biased stretch (basic and acidic residues) spans 268-281 (AREETSTVSEDKDY).

It belongs to the GIP1 family. Expressed in roots, leaves, stems and flowers.

It is found in the nucleus. In terms of biological role, may act as a transcriptional coactivator of LOB domain-containing proteins. This Arabidopsis thaliana (Mouse-ear cress) protein is GBF-interacting protein 1-like.